Consider the following 208-residue polypeptide: Ribosomal RNA large subunit methyltransferase E (208 aa).

Glycine 63, tryptophan 65, aspartate 83, aspartate 99, and aspartate 124 together coordinate S-adenosyl-L-methionine. Lysine 164 acts as the Proton acceptor in catalysis.

Belongs to the class I-like SAM-binding methyltransferase superfamily. RNA methyltransferase RlmE family.

It is found in the cytoplasm. The catalysed reaction is uridine(2552) in 23S rRNA + S-adenosyl-L-methionine = 2'-O-methyluridine(2552) in 23S rRNA + S-adenosyl-L-homocysteine + H(+). Specifically methylates the uridine in position 2552 of 23S rRNA at the 2'-O position of the ribose in the fully assembled 50S ribosomal subunit. The sequence is that of Ribosomal RNA large subunit methyltransferase E from Hamiltonella defensa subsp. Acyrthosiphon pisum (strain 5AT).